The following is a 123-amino-acid chain: uncharacterized protein (123 aa).

The chain crosses the membrane as a helical span at residues 5–25; that stretch reads GTLVIIFAIVLILCIMLLFFY. A disordered region spans residues 33 to 54; the sequence is PGVLPPPIPPPTPPPPKKKYDH. The span at 35-47 shows a compositional bias: pro residues; it reads VLPPPIPPPTPPP.

This sequence belongs to the asfivirus CP123L family.

It localises to the host membrane. Its subcellular location is the virion. This is an uncharacterized protein from African swine fever virus (isolate Warthog/Namibia/Wart80/1980) (ASFV).